A 394-amino-acid chain; its full sequence is Tubby-like F-box protein 2 (394 aa).

The tract at residues 21-44 (SKRSWSKSSHIAPDQTTPPLDNIP) is disordered. Over residues 26–44 (SKSSHIAPDQTTPPLDNIP) the composition is skewed to polar residues. Residues 46–101 (SPWASLPPELLHDIIWRVEESETAWPARAAVVSCASVCKSWRGITMEIVRIPEQCG) form the F-box domain. Disordered stretches follow at residues 200–225 (ASSTAQAQPNRRLHPKQAAPKLPTNS) and 268–297 (IEEEVSSSPSPKGETITTDKEIPDNSPSLR).

Belongs to the TUB family. As to expression, ubiquitous.

The sequence is that of Tubby-like F-box protein 2 from Arabidopsis thaliana (Mouse-ear cress).